A 543-amino-acid polypeptide reads, in one-letter code: Type I restriction enzyme MpnII methylase subunit (543 aa).

S-adenosyl-L-methionine-binding positions include 208–213 (EFFTPQ), 240–242 (SGS), and glutamate 265.

Belongs to the N(4)/N(6)-methyltransferase family. As to quaternary structure, the methyltransferase is composed of M and S polypeptides.

It carries out the reaction a 2'-deoxyadenosine in DNA + S-adenosyl-L-methionine = an N(6)-methyl-2'-deoxyadenosine in DNA + S-adenosyl-L-homocysteine + H(+). The subtype gamma methyltransferase (M) subunit of a type I restriction enzyme. The M and S subunits together form a methyltransferase (MTase) that probably methylates A-2 on the top strand and A-3 on the bottom strand of the sequence 5'-GAN(7)TAY-3'. As the bacterial DNA is methylated on this sequence and this is the only type I methylase in the genome, it is probably responsible for all of the methylation on this site in the genome. The R subunit has multiple frameshifts and is probably not expressed in this bacteria. The sequence is that of Type I restriction enzyme MpnII methylase subunit from Mycoplasma pneumoniae (strain ATCC 29342 / M129 / Subtype 1) (Mycoplasmoides pneumoniae).